A 186-amino-acid polypeptide reads, in one-letter code: Calcium-binding protein NCSA (186 aa).

EF-hand domains are found at residues 40-58, 66-93, 94-129, and 142-177; these read SGTI…MGVG, LFNV…ITRG, TPEE…MYKL, and DPHD…NPDI. Ca(2+) is bound by residues aspartate 107, aspartate 109, asparagine 111, tyrosine 113, glutamate 118, aspartate 155, aspartate 157, aspartate 159, tyrosine 161, and glutamate 166.

This sequence belongs to the recoverin family.

In terms of biological role, may prevent cells from entering development prematurely in the presence of environmental nutrients. This chain is Calcium-binding protein NCSA (ncsA), found in Dictyostelium discoideum (Social amoeba).